A 158-amino-acid chain; its full sequence is Phosphopantetheine adenylyltransferase (158 aa).

Residue T10 participates in substrate binding. ATP contacts are provided by residues T10 to F11 and H18. Substrate is bound by residues K42, L74, and R88. Residues G89–R91, E99, and N124–T130 each bind ATP.

The protein belongs to the bacterial CoaD family. Homohexamer. It depends on Mg(2+) as a cofactor.

It is found in the cytoplasm. It catalyses the reaction (R)-4'-phosphopantetheine + ATP + H(+) = 3'-dephospho-CoA + diphosphate. It participates in cofactor biosynthesis; coenzyme A biosynthesis; CoA from (R)-pantothenate: step 4/5. Reversibly transfers an adenylyl group from ATP to 4'-phosphopantetheine, yielding dephospho-CoA (dPCoA) and pyrophosphate. The protein is Phosphopantetheine adenylyltransferase of Shewanella sediminis (strain HAW-EB3).